The following is a 656-amino-acid chain: Methylenetetrahydrofolate reductase (NADPH) (656 aa).

Residues 1–46 (MVNEARGNDSLNPCLEGSASSSSESSKDSSRCSTPGLDPERHERLR) are disordered. 9 positions are modified to phosphoserine: serine 10, serine 18, serine 20, serine 21, serine 23, serine 25, serine 26, serine 29, and serine 30. Threonine 34 bears the Phosphothreonine mark. Catalysis depends on glutamate 63, which acts as the Proton donor/acceptor. Residues 63 to 68 (EFFPPR) and 94 to 95 (TW) each bind NAD(+). A Phosphothreonine modification is found at threonine 94. Position 94–95 (94–95 (TW)) interacts with FAD. The residue at position 103 (serine 103) is a Phosphoserine. Residues histidine 127, 157–159 (RGD), 174–175 (YA), tyrosine 197, 201–204 (HPEA), aspartate 210, and lysine 217 each bind FAD. Aspartate 159 provides a ligand contact to substrate. 3 residues coordinate substrate: glutamine 228, tyrosine 321, and arginine 325. A Phosphoserine modification is found at serine 394. The residue at position 451 (threonine 451) is a Phosphothreonine. S-adenosyl-L-methionine is bound by residues asparagine 456, 461–464 (AAET), 481–485 (TINSQ), threonine 560, and threonine 573.

This sequence belongs to the methylenetetrahydrofolate reductase family. As to quaternary structure, homodimer. FAD is required as a cofactor. Phosphorylation of an N-terminal serine-rich phosphorylation region increases sensitivity to S-adenosylmethionine and inhibition.

The catalysed reaction is (6S)-5-methyl-5,6,7,8-tetrahydrofolate + NADP(+) = (6R)-5,10-methylene-5,6,7,8-tetrahydrofolate + NADPH + H(+). Its pathway is one-carbon metabolism; tetrahydrofolate interconversion. Its activity is regulated as follows. Allosterically regulated by S-adenosylmethionine (SAM). Functionally, catalyzes the conversion of 5,10-methylenetetrahydrofolate to 5-methyltetrahydrofolate, a cosubstrate for homocysteine remethylation to methionine. Represents a key regulatory connection between the folate and methionine cycles. The protein is Methylenetetrahydrofolate reductase (NADPH) (MTHFR) of Macaca fascicularis (Crab-eating macaque).